A 397-amino-acid polypeptide reads, in one-letter code: CCA-adding enzyme (397 aa).

ATP contacts are provided by Gly-26 and Arg-29. CTP-binding residues include Gly-26 and Arg-29. The Mg(2+) site is built by Asp-39 and Asp-41. Residues Arg-110, Asp-153, Arg-156, Arg-159, and Arg-162 each contribute to the ATP site. CTP-binding residues include Arg-110, Asp-153, Arg-156, Arg-159, and Arg-162.

The protein belongs to the tRNA nucleotidyltransferase/poly(A) polymerase family. Bacterial CCA-adding enzyme type 3 subfamily. In terms of assembly, homodimer. Mg(2+) is required as a cofactor.

The enzyme catalyses a tRNA precursor + 2 CTP + ATP = a tRNA with a 3' CCA end + 3 diphosphate. The catalysed reaction is a tRNA with a 3' CCA end + 2 CTP + ATP = a tRNA with a 3' CCACCA end + 3 diphosphate. Catalyzes the addition and repair of the essential 3'-terminal CCA sequence in tRNAs without using a nucleic acid template. Adds these three nucleotides in the order of C, C, and A to the tRNA nucleotide-73, using CTP and ATP as substrates and producing inorganic pyrophosphate. tRNA 3'-terminal CCA addition is required both for tRNA processing and repair. Also involved in tRNA surveillance by mediating tandem CCA addition to generate a CCACCA at the 3' terminus of unstable tRNAs. While stable tRNAs receive only 3'-terminal CCA, unstable tRNAs are marked with CCACCA and rapidly degraded. In Bacillus cereus (strain ATCC 10987 / NRS 248), this protein is CCA-adding enzyme.